Consider the following 420-residue polypeptide: Transcription activator GLK1 (420 aa).

The tract at residues 74-152 (GDFSNHMNAS…NRISNNEGKR (79 aa)) is disordered. Residues 106-117 (KGEEVVSKRDDV) are compositionally biased toward basic and acidic residues. Residues 135-147 (SSSASSKNNRISN) are compositionally biased toward low complexity. A DNA-binding region (myb-like GARP) is located at residues 150 to 209 (GKRKVKVDWTPELHRRFVEAVEQLGVDKAVPSRILELMGVHCLTRHNVASHLQKYRSHRK).

In terms of assembly, interacts with NAC92. Expressed in rosette and cauline leaves. Expressed at low levels in cotyledons and shoots.

It is found in the nucleus. In terms of biological role, transcriptional activator that functions with GLK2 to promote chloroplast development. Acts as an activator of nuclear photosynthetic genes involved in chlorophyll biosynthesis, light harvesting, and electron transport. Acts in a cell-autonomous manner to coordinate and maintain the photosynthetic apparatus within individual cells. May function in photosynthetic capacity optimization by integrating responses to variable environmental and endogenous cues. Prevents premature senescence. The chain is Transcription activator GLK1 (GLK1) from Arabidopsis thaliana (Mouse-ear cress).